The following is a 1165-amino-acid chain: Disease resistance protein RPS4B (1165 aa).

One can recognise a TIR domain in the interval 12–174 (PQHQVFINFR…EIVKEVKKVL (163 aa)). E86 is an active-site residue. The NB-ARC domain maps to 211–474 (KQRLKELEEK…FLDIACFRSQ (264 aa)). Residues 592–613 (SHCPHECLTNNKINMPDGLELP) form an LRR 1 repeat. One copy of the LRR 2; degenerate repeat lies at 614–635 (LKEVRCLHWLKFPLEELPNDFD). 6 LRR repeats span residues 636 to 659 (PINL…VKDT), 684 to 703 (NLQR…RDVN), 704 to 725 (LTSL…PLIP), 726 to 748 (ENLK…VGNL), 772 to 794 (LKTL…EINK), and 795 to 818 (SSLK…SVQY). An LRR 9; degenerate repeat occupies 819-836 (LCLSRNDHLIYLPAGINQ). One copy of the LRR 10 repeat lies at 837–863 (VSQLTRLDLKYCTKLTYVPELPPTLQY).

Belongs to the disease resistance TIR-NB-LRR family. In terms of assembly, interacts with RRS1B. RPS4B-RRS1B heterodimer interacts with the bacterial effectors AvrRps4 and PopP2.

The protein resides in the nucleus. The enzyme catalyses NAD(+) + H2O = ADP-D-ribose + nicotinamide + H(+). Disease resistance (R) protein that specifically recognizes the AvrRps4 type III effector avirulence protein from P.syringae. Heterodimerization with RRS1B is required to form a functional complex to recognize AvrRps4 and to mediate the hypersensitive response. This chain is Disease resistance protein RPS4B, found in Arabidopsis thaliana (Mouse-ear cress).